Consider the following 562-residue polypeptide: SPI-1 type 3 secretion system secretin (562 aa).

Residues 1 to 24 (MKTHILLARVLACAALVLVTPGYS) form the signal peptide.

It belongs to the bacterial secretin family. T3SS SctC subfamily. The core secretion machinery of the T3SS is composed of approximately 20 different proteins, including cytoplasmic components, a base, an export apparatus and a needle. This subunit is part of the base, which anchors the injectisome in the bacterial cell envelope. Forms a stable homooligomeric complex. The complex is composed of 15 subunits.

The protein localises to the cell outer membrane. In terms of biological role, component of the type III secretion system (T3SS), also called injectisome, which is used to inject bacterial effector proteins into eukaryotic host cells. Forms a ring-shaped multimeric structure with an apparent central pore in the outer membrane. The sequence is that of SPI-1 type 3 secretion system secretin from Salmonella typhimurium (strain LT2 / SGSC1412 / ATCC 700720).